A 680-amino-acid chain; its full sequence is WD repeat-containing protein 48 homolog (680 aa).

8 WD repeats span residues 26-65, 71-110, 113-152, 164-203, 206-245, 248-287, 290-329, and 350-389; these read QHRN…SEKY, HHND…CMST, THRD…ALTA, GSKD…RIMK, GHTE…CVQT, VHKE…NKTL, EEQA…RCTL, and KGGA…KKEQ. Positions 592 to 616 are disordered; the sequence is ETTPSGGNANNSLQNSQSDANSEGS.

Belongs to the WD repeat WDR48 family. As to quaternary structure, catalytic component of the Usp12-46 deubiquitylase complex consisting of Usp12-46, Wdr20 and Uaf1; regulatory subunit that, together wtih Wdr20, stabilizes Usp12-46. The Usp12-46 deubiquitylase complex associates with arr/arrow; the interaction leads to deubiquitination and stabilization of arr/arrow.

Regulatory component of the Usp12-46 deubiquitylase complex. activates deubiquitination by increasing the catalytic turnover without increasing the affinity of deubiquitinating enzymes for the substrate. The complex deubiquitylates the wg/wingless-signaling receptor arr/arrow, which stabilizes the receptor and increases its concentration at the cell surface; this enhances the sensitivity of cells to wg/wingless-signal stimulation. This increases the amplitude and spatial range of the signaling response to the wg/wingless morphogen gradient, facilitating the precise concentration-dependent regulation of its target genes. Together with Wdr20 and Usp12-46 required for wg/wingless-mediated signaling in the wing imaginal disc and for wg/wingless-dependent regulation of intestinal stem cell proliferation. The polypeptide is WD repeat-containing protein 48 homolog (Drosophila sechellia (Fruit fly)).